Reading from the N-terminus, the 721-residue chain is uncharacterized protein (721 aa).

The chain crosses the membrane as a helical span at residues 6–26; that stretch reads QLIFVNFYVILIIWWFVMGIL. Residue 308–315 coordinates ATP; the sequence is GGTGSGKT.

It belongs to the GSP E family. In terms of processing, this protein undergoes a protein self splicing that involves a post-translational excision of the intervening region (intein) followed by peptide ligation.

It is found in the membrane. This is an uncharacterized protein from Methanocaldococcus jannaschii (strain ATCC 43067 / DSM 2661 / JAL-1 / JCM 10045 / NBRC 100440) (Methanococcus jannaschii).